Here is a 173-residue protein sequence, read N- to C-terminus: MTWRERAELRIGISGMPGVGKTTLVLKIAELARSRVKVCGFVTVEVREGGTRIGFDVVDLANGRRMALARVGRGEPSVGKYVVNLEACNVISEALRRECDLKIIDEIGAMEFKCKNFGEDLQTALHTSPRVIATVHRNYIDIAKKLGLEIIWLTRENWGLVFRQLLIQLGLTQ.

Residues 15–22 (GMPGVGKT) and 101–108 (LKIIDEIG) contribute to the ATP site.

The protein belongs to the THEP1 NTPase family.

The catalysed reaction is a ribonucleoside 5'-triphosphate + H2O = a ribonucleoside 5'-diphosphate + phosphate + H(+). Functionally, has nucleotide phosphatase activity towards ATP, GTP, CTP, TTP and UTP. May hydrolyze nucleoside diphosphates with lower efficiency. The polypeptide is Nucleoside-triphosphatase THEP1 (Pyrobaculum aerophilum (strain ATCC 51768 / DSM 7523 / JCM 9630 / CIP 104966 / NBRC 100827 / IM2)).